A 352-amino-acid chain; its full sequence is C-C chemokine receptor type 5 (352 aa).

The Extracellular portion of the chain corresponds to 1 to 30 (MDYQVSSPTYDIDYYTSEPCQKINVKQIAA). Position 3 is a sulfotyrosine (Tyr-3). Ser-6 and Ser-7 each carry an O-linked (GalNAc...) serine glycan. Sulfotyrosine occurs at positions 10, 14, and 15. 2 disulfides stabilise this stretch: Cys-20–Cys-269 and Cys-101–Cys-178. The helical transmembrane segment at 31-58 (RLLPPLYSLVFIFGFVGNILVVLILINC) threads the bilayer. Residues 59–68 (KRLKSMTDIY) are Cytoplasmic-facing. A helical membrane pass occupies residues 69–89 (LLNLAISDLLFLLTVPFWAHY). Residues 90 to 102 (AAAQWDFGNTMCQ) lie on the Extracellular side of the membrane. Residues 103 to 124 (LLTGLYFIGFFSGIFFIILLTI) traverse the membrane as a helical segment. At 125–141 (DRYLAIVHAVFALKART) the chain is on the cytoplasmic side. A helical membrane pass occupies residues 142 to 166 (VTFGVVTSVITWVVAVFASLPGIIF). Over 167–198 (TRSQREGLHYTCSSHFPYSQYQFWKNFQTLKI) the chain is Extracellular. The chain crosses the membrane as a helical span at residues 199–218 (VILGLVLPLLVMVICYSGIL). Residues 219-235 (KTLLRCRNEKKRHRAVR) lie on the Cytoplasmic side of the membrane. A helical transmembrane segment spans residues 236 to 260 (LIFTIMIVYFLFWAPYNIVLLLNTF). The Extracellular segment spans residues 261–277 (QEFFGLNNCSSSNRLDQ). A helical transmembrane segment spans residues 278 to 301 (AMQVTETLGMTHCCINPIIYAFVG). Residues 302–352 (EKFRNYLLVFFQKHIAKRFCKCCSIFQQEAPERASSVYTRSTGEQEISVGL) lie on the Cytoplasmic side of the membrane. Residues Cys-321, Cys-323, and Cys-324 are each lipidated (S-palmitoyl cysteine). A phosphoserine; by BARK1 mark is found at Ser-336, Ser-337, Ser-342, and Ser-349.

Belongs to the G-protein coupled receptor 1 family. Interacts with PRAF2. Efficient ligand binding to CCL3/MIP-1alpha and CCL4/MIP-1beta requires sulfation, O-glycosylation and sialic acid modifications. Glycosylation on Ser-6 is required for efficient binding of CCL4. Interacts with GRK2. Interacts with ARRB1 and ARRB2. Interacts with CNIH4. Interacts with S100A4; this interaction stimulates T-lymphocyte chemotaxis. Post-translationally, sulfated on at least 2 of the N-terminal tyrosines. Sulfation is required for efficient binding of the chemokines, CCL3 and CCL4. Palmitoylation in the C-terminal is important for cell surface expression. In terms of processing, phosphorylation on serine residues in the C-terminal is stimulated by binding CC chemokines especially by APO-RANTES. Post-translationally, O-glycosylated, but not N-glycosylated. Ser-6 appears to be the major site even if Ser-7 may be also O-glycosylated. Also sialylated glycans present which contribute to chemokine binding. Thr-16 and Ser-17 may also be glycosylated and, if so, with small moieties such as a T-antigen.

It is found in the cell membrane. In terms of biological role, receptor for a number of inflammatory CC-chemokines including CCL3/MIP-1-alpha, CCL4/MIP-1-beta and RANTES and subsequently transduces a signal by increasing the intracellular calcium ion level. May play a role in the control of granulocytic lineage proliferation or differentiation. Participates in T-lymphocyte migration to the infection site by acting as a chemotactic receptor. The protein is C-C chemokine receptor type 5 (CCR5) of Papio anubis (Olive baboon).